A 265-amino-acid polypeptide reads, in one-letter code: Transcription factor Spi-B-like (265 aa).

The tract at residues 1 to 31 (MLTLEASQLDGPHPSYMFSDSSFYDLDSCKP) is TAD1 (Acidic). The interval 42 to 63 (AEPPTDPCAGWLELAEPGYEPF) is TAD2. The tract at residues 127 to 160 (TPLSEDDDFPTDAPALEVSDSDSDENLSPGGSLD) is disordered. A DNA-binding region (ETS) is located at residues 169–252 (LRLYQFLLGL…VKKKLTYQFG (84 aa)).

It belongs to the ETS family.

It localises to the nucleus. May act as a sequence specific transcriptional activator. This Paleosuchus palpebrosus (Cuvier's smooth-fronted caiman) protein is Transcription factor Spi-B-like.